The following is a 122-amino-acid chain: MIQTESRLEVADNTGAREVMCIKVLGGSKRRYASVGDIIKVSVKDAAPRGRVKKGDIYNAVVVRTAKGVRRPDGSLIKFDGNAAVLLNTKLEPIGTRIFGPVTRELRTERFMKIVSLAPEVL.

Belongs to the universal ribosomal protein uL14 family. In terms of assembly, part of the 50S ribosomal subunit. Forms a cluster with proteins L3 and L19. In the 70S ribosome, L14 and L19 interact and together make contacts with the 16S rRNA in bridges B5 and B8.

Binds to 23S rRNA. Forms part of two intersubunit bridges in the 70S ribosome. In Ralstonia nicotianae (strain ATCC BAA-1114 / GMI1000) (Ralstonia solanacearum), this protein is Large ribosomal subunit protein uL14.